The chain runs to 317 residues: Transaldolase (317 aa).

The active-site Schiff-base intermediate with substrate is the Lys-132.

Belongs to the transaldolase family. Type 1 subfamily. In terms of assembly, homodimer.

It localises to the cytoplasm. It catalyses the reaction D-sedoheptulose 7-phosphate + D-glyceraldehyde 3-phosphate = D-erythrose 4-phosphate + beta-D-fructose 6-phosphate. Its pathway is carbohydrate degradation; pentose phosphate pathway; D-glyceraldehyde 3-phosphate and beta-D-fructose 6-phosphate from D-ribose 5-phosphate and D-xylulose 5-phosphate (non-oxidative stage): step 2/3. In terms of biological role, transaldolase is important for the balance of metabolites in the pentose-phosphate pathway. In Yersinia pseudotuberculosis serotype O:3 (strain YPIII), this protein is Transaldolase.